A 350-amino-acid polypeptide reads, in one-letter code: Protein-glutamate methylesterase/protein-glutamine glutaminase (350 aa).

The 118-residue stretch at 5–122 folds into the Response regulatory domain; sequence RVLCVDDSAL…REGMLAYSEL (118 aa). A 4-aspartylphosphate modification is found at aspartate 56. A CheB-type methylesterase domain is found at 153-345; it reads LLSSEKLIAI…QRMLAQISAG (193 aa). Residues serine 165, histidine 191, and aspartate 287 contribute to the active site.

This sequence belongs to the CheB family. Post-translationally, phosphorylated by CheA. Phosphorylation of the N-terminal regulatory domain activates the methylesterase activity.

It is found in the cytoplasm. It carries out the reaction [protein]-L-glutamate 5-O-methyl ester + H2O = L-glutamyl-[protein] + methanol + H(+). It catalyses the reaction L-glutaminyl-[protein] + H2O = L-glutamyl-[protein] + NH4(+). Its function is as follows. Involved in chemotaxis. Part of a chemotaxis signal transduction system that modulates chemotaxis in response to various stimuli. Catalyzes the demethylation of specific methylglutamate residues introduced into the chemoreceptors (methyl-accepting chemotaxis proteins or MCP) by CheR. Also mediates the irreversible deamidation of specific glutamine residues to glutamic acid. Does not interact with the C-terminal pentapeptide of the chemoreceptors. This is Protein-glutamate methylesterase/protein-glutamine glutaminase from Pectobacterium atrosepticum (strain SCRI 1043 / ATCC BAA-672) (Erwinia carotovora subsp. atroseptica).